We begin with the raw amino-acid sequence, 316 residues long: Transaldolase (316 aa).

Catalysis depends on Lys131, which acts as the Schiff-base intermediate with substrate.

It belongs to the transaldolase family. Type 1 subfamily. As to quaternary structure, homodimer.

Its subcellular location is the cytoplasm. It catalyses the reaction D-sedoheptulose 7-phosphate + D-glyceraldehyde 3-phosphate = D-erythrose 4-phosphate + beta-D-fructose 6-phosphate. It functions in the pathway carbohydrate degradation; pentose phosphate pathway; D-glyceraldehyde 3-phosphate and beta-D-fructose 6-phosphate from D-ribose 5-phosphate and D-xylulose 5-phosphate (non-oxidative stage): step 2/3. Transaldolase is important for the balance of metabolites in the pentose-phosphate pathway. This chain is Transaldolase, found in Sodalis glossinidius (strain morsitans).